Reading from the N-terminus, the 190-residue chain is Venom nerve growth factor (190 aa).

Residues F1–A7 form the signal peptide. Residues A8–R111 constitute a propeptide that is removed on maturation. C125 and C190 are oxidised to a cystine. N134 is a glycosylation site (N-linked (GlcNAc...) asparagine).

The protein belongs to the NGF-beta family. In terms of assembly, homodimer; non-covalently linked. Post-translationally, glycosylated. In terms of tissue distribution, expressed by the venom gland.

It localises to the secreted. Its function is as follows. Nerve growth factor is important for the development and maintenance of the sympathetic and sensory nervous systems. It stimulates division and differentiation of sympathetic and embryonic sensory neurons as well as basal forebrain cholinergic neurons in the brain. Its relevance in the snake venom is not clear. However, it has been shown to inhibit metalloproteinase-dependent proteolysis of platelet glycoprotein Ib alpha, suggesting a metalloproteinase inhibition to prevent metalloprotease autodigestion and/or protection against prey proteases. Binds a lipid between the two protein chains in the homodimer. The lipid-bound form promotes histamine relase from mouse mast cells, contrary to the lipid-free form. This chain is Venom nerve growth factor, found in Agkistrodon contortrix contortrix (Southern copperhead).